Consider the following 285-residue polypeptide: Undecaprenyl-diphosphatase (285 aa).

The next 7 membrane-spanning stretches (helical) occupy residues 3–23 (ILLL…EFLP), 41–61 (GEIV…AVIW), 87–107 (LLIA…LIKE), 109–129 (LFHP…ILWV), 197–217 (TEFS…YSLI), 226–246 (GDLP…LVCI), and 260–280 (VFAW…WGGW).

It belongs to the UppP family.

It is found in the cell inner membrane. The enzyme catalyses di-trans,octa-cis-undecaprenyl diphosphate + H2O = di-trans,octa-cis-undecaprenyl phosphate + phosphate + H(+). In terms of biological role, catalyzes the dephosphorylation of undecaprenyl diphosphate (UPP). Confers resistance to bacitracin. The protein is Undecaprenyl-diphosphatase of Methylibium petroleiphilum (strain ATCC BAA-1232 / LMG 22953 / PM1).